The following is a 179-amino-acid chain: Ribosome maturation factor RimM (179 aa).

The PRC barrel domain occupies Lys-95–Leu-174.

Belongs to the RimM family. In terms of assembly, binds ribosomal protein uS19.

Its subcellular location is the cytoplasm. An accessory protein needed during the final step in the assembly of 30S ribosomal subunit, possibly for assembly of the head region. Essential for efficient processing of 16S rRNA. May be needed both before and after RbfA during the maturation of 16S rRNA. It has affinity for free ribosomal 30S subunits but not for 70S ribosomes. The sequence is that of Ribosome maturation factor RimM from Campylobacter jejuni subsp. doylei (strain ATCC BAA-1458 / RM4099 / 269.97).